The chain runs to 148 residues: Flagellar assembly factor FliW (148 aa).

Belongs to the FliW family. As to quaternary structure, interacts with translational regulator CsrA and flagellin(s).

The protein localises to the cytoplasm. Its function is as follows. Acts as an anti-CsrA protein, binds CsrA and prevents it from repressing translation of its target genes, one of which is flagellin. Binds to flagellin and participates in the assembly of the flagellum. The protein is Flagellar assembly factor FliW of Ruminiclostridium cellulolyticum (strain ATCC 35319 / DSM 5812 / JCM 6584 / H10) (Clostridium cellulolyticum).